Reading from the N-terminus, the 435-residue chain is Exopolysaccharide production protein ExoQ (435 aa).

10 helical membrane-spanning segments follow: residues 11-31, 35-55, 65-85, 117-137, 156-176, 178-198, 203-223, 230-250, 325-345, and 361-381; these read PGANEVYGIFALALSLFVFAY, FGQVSILAYYGLWLPLVLVDY, YLWIFAFTIFACITIFWSAAP, GMIAGAAIVLLYSLLFGTYHY, LGFYASLGIYFAFAAVFVLGE, GLWMGAAGGAGLLAAYCLLTS, SVLTTAAVIGLCLGMRAITAL, LLFIAASVFGGVAAVAMIYAG, VVETGLIGLILLTMVLVTAFF, and MVLFGVGALLFVRAFVEIDIL.

It is found in the cell membrane. It participates in glycan metabolism; exopolysaccharide biosynthesis. Functionally, involved in the production of exopolysaccharide. This chain is Exopolysaccharide production protein ExoQ (exoQ), found in Rhizobium meliloti (strain 1021) (Ensifer meliloti).